The sequence spans 108 residues: Small ribosomal subunit protein eS25 (108 aa).

Residues 1–36 form a disordered region; that stretch reads MAPKKAQAPPPSSKPAKSGGGKQKKKKWSKGKQKEK. The span at 22–31 shows a compositional bias: basic residues; sequence KQKKKKWSKG.

This sequence belongs to the eukaryotic ribosomal protein eS25 family.

This is Small ribosomal subunit protein eS25 (RPS25) from Solanum lycopersicum (Tomato).